The following is an 89-amino-acid chain: Large ribosomal subunit protein uL23cz/uL23cy (89 aa).

The protein belongs to the universal ribosomal protein uL23 family. In terms of assembly, part of the 50S ribosomal subunit.

It is found in the plastid. The protein resides in the chloroplast. Functionally, binds to 23S rRNA. The protein is Large ribosomal subunit protein uL23cz/uL23cy (rpl23-A) of Pelargonium hortorum (Common geranium).